Reading from the N-terminus, the 186-residue chain is Translation initiation factor IF-3 (186 aa).

The interval 1 to 20 is disordered; that stretch reads MINRSAGKDRDRSRSGDKEL.

It belongs to the IF-3 family. In terms of assembly, monomer.

It localises to the cytoplasm. Functionally, IF-3 binds to the 30S ribosomal subunit and shifts the equilibrium between 70S ribosomes and their 50S and 30S subunits in favor of the free subunits, thus enhancing the availability of 30S subunits on which protein synthesis initiation begins. This is Translation initiation factor IF-3 from Borrelia hermsii (strain HS1 / DAH).